Here is a 555-residue protein sequence, read N- to C-terminus: Intraflagellar transport protein 56 (555 aa).

3 TPR repeats span residues 57–90, 151–184, and 393–426; these read LKNL…EDPD, IEDQ…HRDY, and DDFN…KYRN.

This sequence belongs to the IFT56 family. Component of the IFT complex B.

Its subcellular location is the cell projection. It is found in the cilium. The protein localises to the flagellum. Component of the intraflagellar transport (IFT) complex B required for transport of proteins in the motile cilium. Required for transport of specific ciliary cargo proteins related to motility, while it is neither required for IFT complex B assembly or motion nor for cilium assembly. In Chlamydomonas reinhardtii (Chlamydomonas smithii), this protein is Intraflagellar transport protein 56.